The sequence spans 388 residues: Carbamoyl phosphate synthase small chain (388 aa).

The interval 1 to 198 (MSQDLLPGVT…WPEGYAKLDK (198 aa)) is CPSase. Residues Ser53, Gly250, and Gly252 each coordinate L-glutamine. The Glutamine amidotransferase type-1 domain occupies 202–388 (EVVVIDYGVK…RFAGLMDAAK (187 aa)). Cys279 functions as the Nucleophile in the catalytic mechanism. L-glutamine contacts are provided by Leu280, Gln283, Asn321, Gly323, and Phe324. Catalysis depends on residues His363 and Glu365.

The protein belongs to the CarA family. As to quaternary structure, composed of two chains; the small (or glutamine) chain promotes the hydrolysis of glutamine to ammonia, which is used by the large (or ammonia) chain to synthesize carbamoyl phosphate. Tetramer of heterodimers (alpha,beta)4.

The enzyme catalyses hydrogencarbonate + L-glutamine + 2 ATP + H2O = carbamoyl phosphate + L-glutamate + 2 ADP + phosphate + 2 H(+). It catalyses the reaction L-glutamine + H2O = L-glutamate + NH4(+). It functions in the pathway amino-acid biosynthesis; L-arginine biosynthesis; carbamoyl phosphate from bicarbonate: step 1/1. The protein operates within pyrimidine metabolism; UMP biosynthesis via de novo pathway; (S)-dihydroorotate from bicarbonate: step 1/3. Its function is as follows. Small subunit of the glutamine-dependent carbamoyl phosphate synthetase (CPSase). CPSase catalyzes the formation of carbamoyl phosphate from the ammonia moiety of glutamine, carbonate, and phosphate donated by ATP, constituting the first step of 2 biosynthetic pathways, one leading to arginine and/or urea and the other to pyrimidine nucleotides. The small subunit (glutamine amidotransferase) binds and cleaves glutamine to supply the large subunit with the substrate ammonia. The polypeptide is Carbamoyl phosphate synthase small chain (Caulobacter vibrioides (strain ATCC 19089 / CIP 103742 / CB 15) (Caulobacter crescentus)).